The following is a 629-amino-acid chain: DNA mismatch repair protein MutL (629 aa).

The tract at residues 376–396 is disordered; sequence QYHEKPQQNQPHFSNTPVLPN. The segment covering 382 to 396 has biased composition (polar residues); that stretch reads QQNQPHFSNTPVLPN.

This sequence belongs to the DNA mismatch repair MutL/HexB family.

In terms of biological role, this protein is involved in the repair of mismatches in DNA. It is required for dam-dependent methyl-directed DNA mismatch repair. May act as a 'molecular matchmaker', a protein that promotes the formation of a stable complex between two or more DNA-binding proteins in an ATP-dependent manner without itself being part of a final effector complex. This Haemophilus influenzae (strain PittEE) protein is DNA mismatch repair protein MutL.